Here is a 186-residue protein sequence, read N- to C-terminus: UPF0461 protein C5orf24 homolog (186 aa).

Positions 60-69 (NETHLQTSTS) are enriched in polar residues. The segment at 60 to 140 (NETHLQTSTS…AAGYKVSPGR (81 aa)) is disordered. A compositionally biased stretch (basic residues) spans 78–92 (LKKKKNLGRSGKRGR). Positions 94–107 (SGTTKSAGYRTSTG) are enriched in polar residues.

It belongs to the UPF0461 family.

The polypeptide is UPF0461 protein C5orf24 homolog (Xenopus tropicalis (Western clawed frog)).